Here is a 380-residue protein sequence, read N- to C-terminus: Flap endonuclease 1 (380 aa).

The N-domain stretch occupies residues 1–104; the sequence is MGIQGLAKLI…GELAKRSERR (104 aa). Symmetric dimethylarginine; by PRMT5 is present on R19. D34 is a binding site for Mg(2+). DNA-binding residues include R47 and R70. K80 carries the N6-acetyllysine modification. D86 provides a ligand contact to Mg(2+). Symmetric dimethylarginine; by PRMT5 is present on residues R100 and R104. Residues 122-253 form an I-domain region; the sequence is EVEKFTKRLV…KRAVDLIQKH (132 aa). Mg(2+) is bound by residues E158, E160, D179, and D181. Residue E158 coordinates DNA. Position 187 is a phosphoserine; by CDK2 (S187). Symmetric dimethylarginine; by PRMT5 is present on R192. S197 is modified (phosphoserine). DNA contacts are provided by G231 and D233. D233 serves as a coordination point for Mg(2+). Phosphoserine occurs at positions 255, 293, and 335. Positions 327-380 are disordered; that stretch reads RLSKSRQGSTQGRLDDFFKVTGSLSSAKRKEPEPKGSTKKKAKTGAAGKFKRGK. T336 carries the post-translational modification Phosphothreonine. The interaction with PCNA stretch occupies residues 336 to 344; it reads TQGRLDDFF. An N6-acetyllysine modification is found at K354. The span at 363 to 380 shows a compositional bias: basic residues; that stretch reads STKKKAKTGAAGKFKRGK. T364 carries the post-translational modification Phosphothreonine. K375, K377, and K380 each carry N6-acetyllysine.

It belongs to the XPG/RAD2 endonuclease family. FEN1 subfamily. As to quaternary structure, interacts with PCNA. Three molecules of FEN1 bind to one PCNA trimer with each molecule binding to one PCNA monomer. PCNA stimulates the nuclease activity without altering cleavage specificity. The C-terminal domain binds EP300; can bind simultaneously to both PCNA and EP300. Interacts with DDX11; this interaction is direct and increases flap endonuclease activity of FEN1. Interacts with WDR4; regulating its endonuclease activity. Interacts with POLB. It depends on Mg(2+) as a cofactor. Post-translationally, acetylated by EP300. Acetylation inhibits both endonuclease and exonuclease activity. Acetylation also reduces DNA-binding activity but does not affect interaction with PCNA or EP300. Phosphorylation upon DNA damage induces relocalization to the nuclear plasma. Phosphorylation at Ser-187 by CDK2 occurs during late S-phase and results in dissociation from PCNA. In terms of processing, methylation at Arg-192 by PRMT5 impedes Ser-187 phosphorylation and increases interaction with PCNA.

The protein localises to the nucleus. The protein resides in the nucleolus. It localises to the nucleoplasm. It is found in the mitochondrion. Its function is as follows. Structure-specific nuclease with 5'-flap endonuclease and 5'-3' exonuclease activities involved in DNA replication and repair. During DNA replication, cleaves the 5'-overhanging flap structure that is generated by displacement synthesis when DNA polymerase encounters the 5'-end of a downstream Okazaki fragment. It enters the flap from the 5'-end and then tracks to cleave the flap base, leaving a nick for ligation. Also involved in the long patch base excision repair (LP-BER) pathway, by cleaving within the apurinic/apyrimidinic (AP) site-terminated flap. Acts as a genome stabilization factor that prevents flaps from equilibrating into structures that lead to duplications and deletions. Also possesses 5'-3' exonuclease activity on nicked or gapped double-stranded DNA, and exhibits RNase H activity. Also involved in replication and repair of rDNA and in repairing mitochondrial DNA. The polypeptide is Flap endonuclease 1 (Macaca fascicularis (Crab-eating macaque)).